The chain runs to 178 residues: uncharacterized protein (178 aa).

This sequence belongs to the tail fiber family.

This is an uncharacterized protein from Escherichia coli (strain K12).